The chain runs to 176 residues: MVEEVVRRLDIPDGVDVQISGRSVRVKGPKGELSRELWYPDIEIKREDSKILIRSVARKKQHLAMVGTIAAHIKNMIRGVTDGFEYRMRVVYSHFPIQVKVADGKVAISNFLGERKPRFATIVGDVNVEVGKDEILIRGMDKEAVGQTMANIEQATRVRGFDVRIFQDGIYLVEKR.

Belongs to the universal ribosomal protein uL6 family. In terms of assembly, part of the 50S ribosomal subunit.

This protein binds to the 23S rRNA, and is important in its secondary structure. It is located near the subunit interface in the base of the L7/L12 stalk, and near the tRNA binding site of the peptidyltransferase center. This Methanothrix thermoacetophila (strain DSM 6194 / JCM 14653 / NBRC 101360 / PT) (Methanosaeta thermophila) protein is Large ribosomal subunit protein uL6.